The chain runs to 245 residues: DNA terminal protein (245 aa).

Residues 4 to 55 (KRLKKKLETKRKKSLLVSEGYSKKETKKLKGRELETVYKKKAHNRKNRERAR) carry the Nuclear localization signal motif. Position 194 is an O-(5'-phospho-DNA)-tyrosine (tyrosine 194).

Interacts with the DNA-binding protein P1.

The protein resides in the virion. Acts as a primer for viral genomic replication. DNA terminal protein is covalently linked to the 5'-ends of both strands of the genome through a phosphodiester bond between the beta-hydroxyl group of a tyrosine residue and the 5'-phosphate of the terminal deoxythymidylate. This protein is essential for DNA replication and is involved in the priming of DNA elongation. This Bacillus thuringiensis (Bacillus thuringiensis bacteriophage Bam35c) protein is DNA terminal protein.